Consider the following 615-residue polypeptide: MSPLASKALRPAATDPASIRNFCIIAHIDHGKSTLADRMLQMTGVVDSRSMRAQYLDRMDIERERGITIKSQAVRMPWELDGQTYALNMIDTPGHVDFSYEVSRSLAACEGAILLVDAAQGIEAQTLANLYLALENDLTIIPVLNKIDLPAADPDKYAAELASLIGGDPSDVLRVSGKTGAGVEDLLDRVSRTIPAPVGDPDAAARAMIFDSVYDAYRGVVTYVRMIDGKLSPREKISMMSTRATHEILEIGVSSPEPTPSDGLGVGEVGYLITGVKDVRQSKVGDTVTTAARPATEALPGYTEPLPMVFSGLYPIDGSDYPDLRDALDKLKLSDAALVYEPETSVALGFGFRCGFLGLLHLEIITERLSREFGLDLITTAPSVIYEVTSEDKKTVTVTNPSEFPGGKIVSVSEPVVKAAILAPKDYVGTIMELCQSRRGILLGMEYLGEDRVEVRYTMPLGEIVFDFFDNLKSKTAGYASLDYEPAGSQDSDLVKVDILLQGEQVDAFSAIVHRDKAYAYGVLMTGRLRELIPRQQFEVPIQAAIGARIIARESIRAMRKDVLAKCYGGDITRKRKLLEKQKEGKKRMKMVGRVEVPQEAFIAALSGDTEKKAK.

Positions alanine 17–valine 198 constitute a tr-type G domain. Residues aspartate 29 to threonine 34 and asparagine 145 to aspartate 148 each bind GTP.

This sequence belongs to the TRAFAC class translation factor GTPase superfamily. Classic translation factor GTPase family. LepA subfamily.

The protein localises to the cell membrane. It catalyses the reaction GTP + H2O = GDP + phosphate + H(+). Its function is as follows. Required for accurate and efficient protein synthesis under certain stress conditions. May act as a fidelity factor of the translation reaction, by catalyzing a one-codon backward translocation of tRNAs on improperly translocated ribosomes. Back-translocation proceeds from a post-translocation (POST) complex to a pre-translocation (PRE) complex, thus giving elongation factor G a second chance to translocate the tRNAs correctly. Binds to ribosomes in a GTP-dependent manner. In Clavibacter michiganensis subsp. michiganensis (strain NCPPB 382), this protein is Elongation factor 4.